We begin with the raw amino-acid sequence, 203 residues long: Hypoxanthine-guanine phosphoribosyltransferase (203 aa).

2 residues coordinate diphosphate: lysine 66 and glycine 67. Glutamate 122 and aspartate 123 together coordinate Mg(2+). Aspartate 126 (proton acceptor) is an active-site residue. GMP is bound by residues lysine 154, 175–176, and aspartate 182; that span reads FV. Diphosphate is bound at residue arginine 188.

It belongs to the purine/pyrimidine phosphoribosyltransferase family. The cofactor is Mg(2+).

The protein localises to the cytoplasm. The enzyme catalyses IMP + diphosphate = hypoxanthine + 5-phospho-alpha-D-ribose 1-diphosphate. The catalysed reaction is GMP + diphosphate = guanine + 5-phospho-alpha-D-ribose 1-diphosphate. Its pathway is purine metabolism; IMP biosynthesis via salvage pathway; IMP from hypoxanthine: step 1/1. The protein operates within purine metabolism; GMP biosynthesis via salvage pathway; GMP from guanine: step 1/1. In terms of biological role, purine salvage pathway enzyme that catalyzes the transfer of the ribosyl-5-phosphate group from 5-phospho-alpha-D-ribose 1-diphosphate (PRPP) to the N9 position of the 6-oxopurines hypoxanthine and guanine to form the corresponding ribonucleotides IMP (inosine 5'-monophosphate) and GMP (guanosine 5'-monophosphate), with the release of PPi. The chain is Hypoxanthine-guanine phosphoribosyltransferase (hpt) from Mycobacterium avium.